The chain runs to 706 residues: Probable protein S-acyltransferase 20 (706 aa).

Helical transmembrane passes span 16-36 (VIAI…FAPF) and 41-61 (IWEY…FVLY). The DHHC domain occupies 172 to 222 (LFCTLCNCEVRKFSKHCRSCDKCVDCFDHHCKWLNNCVGRKNYVTFVSLMS). The active-site S-palmitoyl cysteine intermediate is the cysteine 202. 2 helical membrane passes run 220 to 240 (LMSA…AVIV) and 275 to 295 (AVAI…MLLI). 3 disordered regions span residues 470 to 505 (SSLS…HVHE), 591 to 621 (LNPS…ALRD), and 680 to 706 (RDST…SNIK). 3 stretches are compositionally biased toward polar residues: residues 492–501 (HGMSNLSSPS), 591–603 (LNPS…TQNP), and 697–706 (ANSQTGSNIK).

It belongs to the DHHC palmitoyltransferase family.

It is found in the cell membrane. Its subcellular location is the cytoplasmic vesicle membrane. It carries out the reaction L-cysteinyl-[protein] + hexadecanoyl-CoA = S-hexadecanoyl-L-cysteinyl-[protein] + CoA. Palmitoyl acyltransferase. This chain is Probable protein S-acyltransferase 20 (PAT20), found in Arabidopsis thaliana (Mouse-ear cress).